The primary structure comprises 423 residues: Torsin-4A (423 aa).

The interval P47–R68 is disordered. S63 and S81 each carry phosphoserine. The residue at position 89 (T89) is a Phosphothreonine. Position 106 is a phosphoserine (S106). Residues C122–I138 traverse the membrane as a helical segment. G194–S201 serves as a coordination point for ATP.

Belongs to the ClpA/ClpB family. Torsin subfamily.

It is found in the membrane. This Homo sapiens (Human) protein is Torsin-4A (TOR4A).